Reading from the N-terminus, the 424-residue chain is Protein FAM43A (424 aa).

Over residues 261 to 297 (QQEEELQEEEEEHLEDCLEEEEEEDGVGDGDPAEEEA) the composition is skewed to acidic residues. Disordered regions lie at residues 261–299 (QQEE…EAEA) and 382–424 (LLSG…PYSG). Positions 382 to 394 (LLSGESTGSESSI) are enriched in low complexity. Over residues 405–418 (SPGNPSGPADSTSL) the composition is skewed to polar residues.

The protein belongs to the FAM43 family.

This chain is Protein FAM43A (Fam43a), found in Mus musculus (Mouse).